A 408-amino-acid polypeptide reads, in one-letter code: LL-diaminopimelate aminotransferase (408 aa).

2 residues coordinate substrate: Tyr-15 and Gly-42. Residues Tyr-72, 108–109, Tyr-132, Asn-187, Tyr-218, and 246–248 contribute to the pyridoxal 5'-phosphate site; these read SK and SFS. Lys-109, Tyr-132, and Asn-187 together coordinate substrate. Lys-249 bears the N6-(pyridoxal phosphate)lysine mark. Residues Arg-257 and Asn-292 each contribute to the pyridoxal 5'-phosphate site. Substrate is bound by residues Asn-292 and Arg-388.

It belongs to the class-I pyridoxal-phosphate-dependent aminotransferase family. LL-diaminopimelate aminotransferase subfamily. As to quaternary structure, homodimer. Pyridoxal 5'-phosphate is required as a cofactor.

It catalyses the reaction (2S,6S)-2,6-diaminopimelate + 2-oxoglutarate = (S)-2,3,4,5-tetrahydrodipicolinate + L-glutamate + H2O + H(+). The protein operates within amino-acid biosynthesis; L-lysine biosynthesis via DAP pathway; LL-2,6-diaminopimelate from (S)-tetrahydrodipicolinate (aminotransferase route): step 1/1. Involved in the synthesis of meso-diaminopimelate (m-DAP or DL-DAP), required for both lysine and peptidoglycan biosynthesis. Catalyzes the direct conversion of tetrahydrodipicolinate to LL-diaminopimelate. The polypeptide is LL-diaminopimelate aminotransferase (Synechococcus sp. (strain CC9311)).